Reading from the N-terminus, the 289-residue chain is Diaminopimelate epimerase (289 aa).

Residues asparagine 15 and asparagine 76 each contribute to the substrate site. Residue cysteine 85 is the Proton donor of the active site. Substrate contacts are provided by residues 86 to 87 (GN), asparagine 158, asparagine 191, and 209 to 210 (ER). The active-site Proton acceptor is the cysteine 218. 219-220 (GT) provides a ligand contact to substrate.

The protein belongs to the diaminopimelate epimerase family. As to quaternary structure, homodimer.

It is found in the cytoplasm. The catalysed reaction is (2S,6S)-2,6-diaminopimelate = meso-2,6-diaminopimelate. The protein operates within amino-acid biosynthesis; L-lysine biosynthesis via DAP pathway; DL-2,6-diaminopimelate from LL-2,6-diaminopimelate: step 1/1. Catalyzes the stereoinversion of LL-2,6-diaminopimelate (L,L-DAP) to meso-diaminopimelate (meso-DAP), a precursor of L-lysine and an essential component of the bacterial peptidoglycan. This is Diaminopimelate epimerase from Streptomyces coelicolor (strain ATCC BAA-471 / A3(2) / M145).